The sequence spans 410 residues: Neuroserpin (410 aa).

Residues 1 to 16 (MYFLGLLSLLVLPSKA) form the signal peptide. Asn157 and Asn401 each carry an N-linked (GlcNAc...) asparagine glycan.

This sequence belongs to the serpin family. As to expression, detected in embryonic ocular vitreous fluid (at protein level). In the embryo present in retina, brain, cerebellum and spinal cord. In adult, predominantly expressed in the brain.

The protein resides in the secreted. It is found in the cytoplasmic vesicle. Its subcellular location is the secretory vesicle lumen. The protein localises to the perikaryon. Functionally, serine protease inhibitor that inhibits plasminogen activators and plasmin but not thrombin. May be involved in the formation or reorganization of synaptic connections as well as for synaptic plasticity in the adult nervous system. May protect neurons from cell damage by tissue-type plasminogen activator. This is Neuroserpin (SERPINI1) from Gallus gallus (Chicken).